The following is a 374-amino-acid chain: Putative glutamate--cysteine ligase 2 (374 aa).

This sequence belongs to the glutamate--cysteine ligase type 2 family. YbdK subfamily.

It carries out the reaction L-cysteine + L-glutamate + ATP = gamma-L-glutamyl-L-cysteine + ADP + phosphate + H(+). Functionally, ATP-dependent carboxylate-amine ligase which exhibits weak glutamate--cysteine ligase activity. The chain is Putative glutamate--cysteine ligase 2 from Acidovorax sp. (strain JS42).